The chain runs to 451 residues: ACT domain-containing protein ACR4 (451 aa).

ACT domains follow at residues 35-118, 123-200, 259-335, and 337-416; these read VIRV…VIPS, VIEL…NTPR, VVTV…VSEG, and KLEL…QEQQ. Positions 409–428 are disordered; that stretch reads KNNPQEQQQRQKSPSHESPT. Positions 410–420 are enriched in polar residues; that stretch reads NNPQEQQQRQK.

Highly expressed in flowers and at lower levels in leaves and siliques.

Its function is as follows. May bind amino acids. In Arabidopsis thaliana (Mouse-ear cress), this protein is ACT domain-containing protein ACR4.